A 63-amino-acid chain; its full sequence is SERF-like protein C1705.02 (63 aa).

Residues 1-13 are compositionally biased toward basic and acidic residues; sequence MSRGNQRDVDRAR. A disordered region spans residues 1–63; the sequence is MSRGNQRDVD…EANGGSKGKK (63 aa). Positions 14–24 are enriched in basic residues; it reads NLKKSQASKKK. Positions 25 to 35 are enriched in basic and acidic residues; that stretch reads QAGDPTKRLEA.

It belongs to the SERF family.

It is found in the cytoplasm. Its subcellular location is the nucleus. The protein localises to the nucleolus. The sequence is that of SERF-like protein C1705.02 from Schizosaccharomyces pombe (strain 972 / ATCC 24843) (Fission yeast).